Here is a 264-residue protein sequence, read N- to C-terminus: Tryptophan synthase alpha chain (264 aa).

Residues glutamate 45 and aspartate 56 each act as proton acceptor in the active site.

It belongs to the TrpA family. As to quaternary structure, tetramer of two alpha and two beta chains.

It catalyses the reaction (1S,2R)-1-C-(indol-3-yl)glycerol 3-phosphate + L-serine = D-glyceraldehyde 3-phosphate + L-tryptophan + H2O. Its pathway is amino-acid biosynthesis; L-tryptophan biosynthesis; L-tryptophan from chorismate: step 5/5. Its function is as follows. The alpha subunit is responsible for the aldol cleavage of indoleglycerol phosphate to indole and glyceraldehyde 3-phosphate. The sequence is that of Tryptophan synthase alpha chain from Leptospira interrogans serogroup Icterohaemorrhagiae serovar copenhageni (strain Fiocruz L1-130).